The following is a 315-amino-acid chain: Taste receptor type 2 member 3 (315 aa).

At 1–5 the chain is on the extracellular side; the sequence is MGLTE. Residues 6 to 26 form a helical membrane-spanning segment; the sequence is GVFLILSGTQFTLGILVNCFI. Residues 27 to 41 lie on the Cytoplasmic side of the membrane; that stretch reads ELVNGSSWFKTKRMS. Residues 42 to 62 traverse the membrane as a helical segment; it reads LSDFIITTLALLRIILLCIIL. Topologically, residues 63–93 are extracellular; sequence TDSFLIEFSPNTHDSGIIMQIIDVSWTFTNH. A helical transmembrane segment spans residues 94-114; the sequence is LSIWLATCLGVLYCLKIASFS. Residues 115-127 are Cytoplasmic-facing; that stretch reads HPTFLWLKWRVSR. Residues 128–148 traverse the membrane as a helical segment; the sequence is VMVWMLLGALLLSCGSTASLI. The Extracellular portion of the chain corresponds to 149–185; the sequence is NEFKLYSVFRGIEATRNVTEHFRKKRSEYYLIHVLGT. Asn165 carries N-linked (GlcNAc...) asparagine glycosylation. A helical membrane pass occupies residues 186–206; that stretch reads LWYLPPLIVSLASYSLLIFSL. The Cytoplasmic portion of the chain corresponds to 207 to 233; sequence GRHTRQMLQNGTSSRDPTTEAHKRAIR. Residues 234–254 form a helical membrane-spanning segment; it reads IILSFFFLFLLYFLAFLIASF. Over 255 to 265 the chain is Extracellular; that stretch reads GNFLPKTKMAK. A helical transmembrane segment spans residues 266-286; the sequence is MIGEVMTMFYPAGHSFILILG. Topologically, residues 287–315 are cytoplasmic; it reads NSKLKQTFVVMLRCESGHLKPGSKGPIFS.

It belongs to the G-protein coupled receptor T2R family.

The protein localises to the membrane. In terms of biological role, gustducin-coupled receptor implicated in the perception of bitter compounds in the oral cavity and the gastrointestinal tract. Signals through PLCB2 and the calcium-regulated cation channel TRPM5. The sequence is that of Taste receptor type 2 member 3 (TAS2R3) from Gorilla gorilla gorilla (Western lowland gorilla).